Reading from the N-terminus, the 355-residue chain is Hyaluronan and proteoglycan link protein 1 (355 aa).

Positions 1 to 9 (MTSLLFLVL) are excised as a propeptide. N-linked (GlcNAc...) asparagine glycosylation is found at asparagine 21 and asparagine 56. Residues 38 to 156 (PRLLVVAEQA…EDDTAVVALN (119 aa)) enclose the Ig-like V-type domain. 5 disulfide bridges follow: cysteine 61–cysteine 140, cysteine 182–cysteine 253, cysteine 206–cysteine 227, cysteine 280–cysteine 350, and cysteine 305–cysteine 326. 2 Link domains span residues 160–255 (VVFP…FCFT) and 260–352 (GRFY…YCFR).

Belongs to the HAPLN family.

The protein resides in the secreted. The protein localises to the extracellular space. It is found in the extracellular matrix. Its function is as follows. Stabilizes the aggregates of proteoglycan monomers with hyaluronic acid in the extracellular cartilage matrix. The sequence is that of Hyaluronan and proteoglycan link protein 1 (HAPLN1) from Gallus gallus (Chicken).